A 220-amino-acid polypeptide reads, in one-letter code: Small ribosomal subunit protein uS3 (220 aa).

The region spanning 43–111 (IRSYLTKTLD…QVQLNILEVK (69 aa)) is the KH type-2 domain.

The protein belongs to the universal ribosomal protein uS3 family. In terms of assembly, part of the 30S ribosomal subunit. Forms a tight complex with proteins S10 and S14.

Binds the lower part of the 30S subunit head. Binds mRNA in the 70S ribosome, positioning it for translation. In Tropheryma whipplei (strain TW08/27) (Whipple's bacillus), this protein is Small ribosomal subunit protein uS3.